The chain runs to 416 residues: Pentraxin fusion protein (416 aa).

Residues 1 to 14 (MKSLLLFLKSQVFG) form the signal peptide. An N-linked (GlcNAc...) asparagine glycan is attached at N129. The tract at residues 184–206 (GTEASDSSESVDGTEAPASPESD) is disordered. One can recognise a Pentraxin (PTX) domain in the interval 220 to 416 (TNKSFMFPKE…YSMIGNVAEV (197 aa)). N221 carries N-linked (GlcNAc...) asparagine glycosylation. C251 and C311 form a disulfide bridge. Residues D275, Q353, D354, and Q364 each contribute to the Ca(2+) site.

Requires Ca(2+) as cofactor.

This is Pentraxin fusion protein (pxn1) from Xenopus laevis (African clawed frog).